Here is a 1193-residue protein sequence, read N- to C-terminus: DNA-directed RNA polymerase subunit beta (1193 aa).

Over residues 1149-1162 (EEEIEMRDLEDEED) the composition is skewed to acidic residues. The interval 1149 to 1193 (EEEIEMRDLEDEEDAKQADGLALSGDEEPEETASADVERDVVTKE) is disordered. A compositionally biased stretch (basic and acidic residues) spans 1184–1193 (DVERDVVTKE).

This sequence belongs to the RNA polymerase beta chain family. In terms of assembly, RNAP is composed of a core of 2 alpha, a beta and a beta' subunit. The core is associated with a delta subunit, and at least one of epsilon or omega. When a sigma factor is associated with the core the holoenzyme is formed, which can initiate transcription.

It catalyses the reaction RNA(n) + a ribonucleoside 5'-triphosphate = RNA(n+1) + diphosphate. In terms of biological role, DNA-dependent RNA polymerase catalyzes the transcription of DNA into RNA using the four ribonucleoside triphosphates as substrates. The sequence is that of DNA-directed RNA polymerase subunit beta from Bacillus subtilis (strain 168).